Consider the following 129-residue polypeptide: MARKQVSRKRRVKKNVENGVAHIRSTFNNTIVTITDEFGNALSWSSAGALGFKGSKKSTPFAAQMASETASKTAMEHGLKSVEVTVKGPGPGRESAIRALQSAGLEVTAIRDVTPVPHNGCRPPKRRRV.

This sequence belongs to the universal ribosomal protein uS11 family. In terms of assembly, part of the 30S ribosomal subunit. Interacts with proteins S7 and S18. Binds to IF-3.

In terms of biological role, located on the platform of the 30S subunit, it bridges several disparate RNA helices of the 16S rRNA. Forms part of the Shine-Dalgarno cleft in the 70S ribosome. The chain is Small ribosomal subunit protein uS11 from Staphylococcus carnosus (strain TM300).